The primary structure comprises 432 residues: Argininosuccinate lyase (432 aa).

The protein belongs to the lyase 1 family. Argininosuccinate lyase subfamily.

The protein localises to the cytoplasm. The enzyme catalyses 2-(N(omega)-L-arginino)succinate = fumarate + L-arginine. It participates in amino-acid biosynthesis; L-arginine biosynthesis; L-arginine from L-ornithine and carbamoyl phosphate: step 3/3. The chain is Argininosuccinate lyase from Xanthomonas euvesicatoria pv. vesicatoria (strain 85-10) (Xanthomonas campestris pv. vesicatoria).